An 897-amino-acid polypeptide reads, in one-letter code: Probable basic-leucine zipper transcription factor R (897 aa).

2 disordered regions span residues 38-88 (DDNI…NIET) and 128-198 (YQQR…NSNS). Low complexity predominate over residues 44 to 75 (NNNNNNNNNNNNNNNNNNNNNNNNNNNNNNNN). Positions 76 to 88 (IGSPQIMNENIET) are enriched in polar residues. Residues 94–137 (QYLERLQSIQQQQHQCQTQIQQQLQNYQQQYEDQYQQRQQQYQD) adopt a coiled-coil conformation. Residues 128 to 140 (YQQRQQQYQDQYQ) are compositionally biased toward low complexity. The span at 141-157 (KPYSSPPLNFNSIPPIT) shows a compositional bias: polar residues. Residues 158 to 198 (NNNNNNNNNNNNNNNNNNSNSNSNSNSNSNSNSNSNSNSNS) show a composition bias toward low complexity. Coiled coils occupy residues 228–258 (LQQQQQQQQQQQQQQQQQQQQQQQQQQQQQQ) and 330–407 (QQLQ…QQQQ). Residues 461-516 (LQLPTPFYSPQQQQQQHTPISSFIPPPSLPSSPPSPPSPPSPPPQQQQQQQQQQQQ) are disordered. Residues 484-505 (IPPPSLPSSPPSPPSPPSPPPQ) show a composition bias toward pro residues. A compositionally biased stretch (low complexity) spans 506-516 (QQQQQQQQQQQ). Residues 557–620 (ESKESIKKYN…SIEMMRMEPE (64 aa)) enclose the bZIP domain. Residues 559-564 (KESIKK) form a basic motif region. Residues 569–576 (IASRNYRL) are leucine-zipper.

It belongs to the bZIP family.

It localises to the nucleus. In terms of biological role, probable transcriptional regulator. The chain is Probable basic-leucine zipper transcription factor R (bzpR) from Dictyostelium discoideum (Social amoeba).